We begin with the raw amino-acid sequence, 278 residues long: HTH-type transcriptional regulator HdfR (278 aa).

Positions 1 to 58 (MDTELLKTFLEVSRTRHFGRAAEALYLTQSAVSFRIRQLENQLGVNLFTRHRNNIRLT) constitute an HTH lysR-type domain. Positions 18-37 (FGRAAEALYLTQSAVSFRIR) form a DNA-binding region, H-T-H motif.

The protein belongs to the LysR transcriptional regulatory family.

Negatively regulates the transcription of the flagellar master operon flhDC by binding to the upstream region of the operon. The polypeptide is HTH-type transcriptional regulator HdfR (Salmonella agona (strain SL483)).